The primary structure comprises 23 residues: PAKQVAFAEHAREKMLRGVNVLA.

This sequence belongs to the chaperonin (HSP60) family. In terms of assembly, forms a cylinder of 14 subunits composed of two heptameric rings stacked back-to-back. Interacts with the co-chaperonin GroES. In terms of processing, phosphorylated on threonine.

It is found in the cytoplasm. It catalyses the reaction ATP + H2O + a folded polypeptide = ADP + phosphate + an unfolded polypeptide.. Its function is as follows. Together with its co-chaperonin GroES, plays an essential role in assisting protein folding. The GroEL-GroES system forms a nano-cage that allows encapsulation of the non-native substrate proteins and provides a physical environment optimized to promote and accelerate protein folding. The chain is Chaperonin GroEL from Acidithiobacillus ferrooxidans (Thiobacillus ferrooxidans).